Here is a 383-residue protein sequence, read N- to C-terminus: Delta(12)-fatty-acid desaturase FAD2 (383 aa).

Helical transmembrane passes span Val56–Leu76 and Val84–Ala104. Positions His105–His109 match the Histidine box-1 motif. A helical transmembrane segment spans residues Leu117–Trp137. Positions His141 to His145 match the Histidine box-2 motif. 3 helical membrane passes run Leu179 to Ser199, Ile225 to Ala245, and Ala249 to Ile269. The Histidine box-3 signature appears at His315 to His319.

Belongs to the fatty acid desaturase type 1 family. In terms of tissue distribution, expressed in leaves and seeds.

The protein resides in the endoplasmic reticulum membrane. It catalyses the reaction (9Z)-octadecenoyl-CoA + 2 Fe(II)-[cytochrome b5] + O2 + 2 H(+) = (9Z,12Z)-octadecadienoyl-CoA + 2 Fe(III)-[cytochrome b5] + 2 H2O. It carries out the reaction (9Z)-hexadecenoyl-CoA + 2 Fe(II)-[cytochrome b5] + O2 + 2 H(+) = (9Z,12Z)-hexadecadienoyl-CoA + 2 Fe(III)-[cytochrome b5] + 2 H2O. It functions in the pathway lipid metabolism; polyunsaturated fatty acid biosynthesis. Functionally, catalyzes the desaturation of oleic acid (18:1(9Z)) to linoleic acid (18:2(9Z,12Z)). The chain is Delta(12)-fatty-acid desaturase FAD2 from Vernicia fordii (Tung).